The sequence spans 526 residues: MYYRSIKSEIIQTICTYHEEPSLIFNKICRTKTETLLLESATVHGKKNIESMLIIDTAIKISCFKNIVEIEAISNNGLFLLNTIDLKILKKKSTKIKKKKSNVLEIHFPIFNYFTDEDKKLFLTSVFDALRIIKKSIKNPEKSKMGVFFGGILSYDLISSFEPIPRVFNSKYNHPDFCFYLSENLLIFDHKKKKCKLQTNIFTDNEEEKLNILKRIKIIYNQIKEINSKKKNNRINTFNDFKTKNKKWVDCKNDSKVYKNKVKKMKQMILNGEVFQIVISRKFFLPCPYPLESYIFLKKNNPSPYMFFMQDRHFVLFGASPESSLKFSSITRKIEIHPIAGTRPRAFSSIKKIDINEDNKMELAMRINSKELAEHCMLVDLARNDLSRICLPGSRVVSDLMKVVKYSHVMHLVSKVEGVLRNDLDIFHAYQCCMNMGTLTGAPKIRAMQIIAEEGEIRECYGGAIGYFTGKGDLDTCIVIRSAYVRNGIACVQAGAGIVLDSIADEENEECKNKAMAVINAINKTL.

L-tryptophan-binding positions include Ser-40 and Pro-304–Met-306. Gly-341–Thr-342 provides a ligand contact to chorismate. Glu-374 provides a ligand contact to Mg(2+). Residues Tyr-461, Arg-481, Gly-495–Gly-497, and Gly-497 contribute to the chorismate site. Glu-510 contacts Mg(2+).

This sequence belongs to the anthranilate synthase component I family. In terms of assembly, heterotetramer consisting of two non-identical subunits: a beta subunit (TrpG) and a large alpha subunit (TrpE). It depends on Mg(2+) as a cofactor.

It catalyses the reaction chorismate + L-glutamine = anthranilate + pyruvate + L-glutamate + H(+). The protein operates within amino-acid biosynthesis; L-tryptophan biosynthesis; L-tryptophan from chorismate: step 1/5. Its activity is regulated as follows. Feedback inhibited by tryptophan. In terms of biological role, part of a heterotetrameric complex that catalyzes the two-step biosynthesis of anthranilate, an intermediate in the biosynthesis of L-tryptophan. In the first step, the glutamine-binding beta subunit (TrpG) of anthranilate synthase (AS) provides the glutamine amidotransferase activity which generates ammonia as a substrate that, along with chorismate, is used in the second step, catalyzed by the large alpha subunit of AS (TrpE) to produce anthranilate. In the absence of TrpG, TrpE can synthesize anthranilate directly from chorismate and high concentrations of ammonia. The chain is Anthranilate synthase component 1 (trpE) from Buchnera aphidicola subsp. Tetraneura caerulescens.